A 207-amino-acid polypeptide reads, in one-letter code: MSDYHGPLRVGIGGPVGSGKTALMDLLCKTLRDRYQIAAITNDIYTKWDAEFLVRSGSLTQDRIVGVETGGCPHTAIREDASMNLAAVADMRAKFPDLDLVLIESGGDNLAATFSPELADLTIYVIDVAAGDKIPSKGGPGITRSDLLVINKIDLAPYVGASLDKMQIDAKRMRGERPFVMTNLKTQEGLDRIVGFIEAKGGLRAGS.

GTP is bound at residue 14-21 (GPVGSGKT).

This sequence belongs to the SIMIBI class G3E GTPase family. UreG subfamily. As to quaternary structure, homodimer. UreD, UreF and UreG form a complex that acts as a GTP-hydrolysis-dependent molecular chaperone, activating the urease apoprotein by helping to assemble the nickel containing metallocenter of UreC. The UreE protein probably delivers the nickel.

The protein resides in the cytoplasm. Functionally, facilitates the functional incorporation of the urease nickel metallocenter. This process requires GTP hydrolysis, probably effectuated by UreG. This is Urease accessory protein UreG from Rhodopseudomonas palustris (strain BisB18).